The following is a 424-amino-acid chain: Tyrosine--tRNA ligase (424 aa).

Tyrosine 37 serves as a coordination point for L-tyrosine. The short motif at 42 to 51 is the 'HIGH' region element; the sequence is ITADSLHVGH. L-tyrosine contacts are provided by tyrosine 175 and glutamine 179. The 'KMSKS' region signature appears at 235 to 239; the sequence is KFGKT. Position 238 (lysine 238) interacts with ATP. In terms of domain architecture, S4 RNA-binding spans 356-414; it reads GNLQQLLVYSRLALSRSHAKSMIVSNSVRINNIIQNNPFYILCNRDKMYHKYTLLSRGK.

It belongs to the class-I aminoacyl-tRNA synthetase family. TyrS type 1 subfamily. As to quaternary structure, homodimer.

The protein resides in the cytoplasm. The catalysed reaction is tRNA(Tyr) + L-tyrosine + ATP = L-tyrosyl-tRNA(Tyr) + AMP + diphosphate + H(+). Its function is as follows. Catalyzes the attachment of tyrosine to tRNA(Tyr) in a two-step reaction: tyrosine is first activated by ATP to form Tyr-AMP and then transferred to the acceptor end of tRNA(Tyr). In Buchnera aphidicola subsp. Baizongia pistaciae (strain Bp), this protein is Tyrosine--tRNA ligase.